The chain runs to 458 residues: Monomethylamine methyltransferase MtmB2 (458 aa).

Residue Pyl-202 is a non-standard amino acid, pyrrolysine.

This sequence belongs to the monomethylamine methyltransferase family. In terms of assembly, can form a complex with MtmC (MtmC1 or MtmC2).

It carries out the reaction Co(I)-[methylamine-specific corrinoid protein] + methylamine + H(+) = methyl-Co(III)-[methylamine-specific corrinoid protein] + NH4(+). Its pathway is one-carbon metabolism; methanogenesis from methylamine. Functionally, catalyzes the transfer of the methyl group from monomethylamine to the corrinoid cofactor of MtmC (MtmC1 or MtmC2). The sequence is that of Monomethylamine methyltransferase MtmB2 (mtmB2) from Methanosarcina barkeri.